The following is a 1032-amino-acid chain: Protein transport protein Sec24D (1032 aa).

The segment at 1 to 260 (MSQQGYVATP…GPPQPQKKLD (260 aa)) is disordered. The span at 102-133 (PSAQSSYPGPISTSSVTQLGSQLSAMQINSYG) shows a compositional bias: polar residues. Pro residues predominate over residues 198 to 212 (GPPPPNAQYQPPPLP). Residue Ser-266 is modified to Phosphoserine. The Zn(2+) site is built by Cys-363, Cys-366, Cys-385, and Cys-388. The zinc finger-like stretch occupies residues 363 to 388 (CNRCKAYMCPFMQFIEGGRRYQCGFC). The Gelsolin-like repeat unit spans residues 901–974 (MLPAAVRCSE…PYSQQLRMIM (74 aa)).

Belongs to the SEC23/SEC24 family. SEC24 subfamily. COPII is composed of at least five proteins: the Sec23/24 complex, the Sec13/31 complex and Sar1. Interacts with TMED2 and TMED10. Interacts with CNIH4. Interacts with GOSR2 (via IxM motif) and STX5 (via IxM motif); recruits GOSR2 and STX5 into COPII-coated vesicles. Interacts with KCNA3; this interaction is reduced in the presence of KCNE4. As to expression, ubiquitously expressed, with higher amounts in placenta, pancreas, heart and liver.

It localises to the cytoplasmic vesicle. The protein localises to the COPII-coated vesicle membrane. It is found in the endoplasmic reticulum membrane. The protein resides in the cytoplasm. Its subcellular location is the cytosol. Functionally, component of the coat protein complex II (COPII) which promotes the formation of transport vesicles from the endoplasmic reticulum (ER). The coat has two main functions, the physical deformation of the endoplasmic reticulum membrane into vesicles and the selection of cargo molecules for their transport to the Golgi complex. Plays a central role in cargo selection within the COPII complex and together with SEC24C may have a different specificity compared to SEC24A and SEC24B. May more specifically package GPI-anchored proteins through the cargo receptor TMED10. May also be specific for IxM motif-containing cargos like the SNAREs GOSR2 and STX5. This Homo sapiens (Human) protein is Protein transport protein Sec24D.